Consider the following 106-residue polypeptide: Tripartite terminase subunit 2 (106 aa).

It belongs to the herpesviridae TRM2 protein family. As to quaternary structure, associates with TRM1 and TRM3 to form the tripartite terminase complex.

The protein resides in the host nucleus. Its function is as follows. Component of the molecular motor that translocates viral genomic DNA in empty capsid during DNA packaging. Forms a tripartite terminase complex together with TRM1 and TRM3 in the host cytoplasm. Once the complex reaches the host nucleus, it interacts with the capsid portal vertex. This portal forms a ring in which genomic DNA is translocated into the capsid. This Homo sapiens (Human) protein is Tripartite terminase subunit 2.